Consider the following 721-residue polypeptide: Polyribonucleotide nucleotidyltransferase (721 aa).

Positions 495 and 501 each coordinate Mg(2+). The KH domain occupies 562 to 621 (PRLLSFRIDPELIGTVIGPGGRTIKGITERTNTKIDIEDGGIVTIASHDGAAAEEAQKII). Positions 631–699 (GEIFPGVVTR…SRGRINLTLR (69 aa)) constitute an S1 motif domain.

The protein belongs to the polyribonucleotide nucleotidyltransferase family. The cofactor is Mg(2+).

It localises to the cytoplasm. The enzyme catalyses RNA(n+1) + phosphate = RNA(n) + a ribonucleoside 5'-diphosphate. Its function is as follows. Involved in mRNA degradation. Catalyzes the phosphorolysis of single-stranded polyribonucleotides processively in the 3'- to 5'-direction. The protein is Polyribonucleotide nucleotidyltransferase of Prochlorococcus marinus subsp. pastoris (strain CCMP1986 / NIES-2087 / MED4).